The chain runs to 196 residues: Probable malonic semialdehyde reductase RutE (196 aa).

Belongs to the nitroreductase family. HadB/RutE subfamily. FMN serves as cofactor.

It catalyses the reaction 3-hydroxypropanoate + NADP(+) = 3-oxopropanoate + NADPH + H(+). Functionally, may reduce toxic product malonic semialdehyde to 3-hydroxypropionic acid, which is excreted. This chain is Probable malonic semialdehyde reductase RutE, found in Yersinia enterocolitica serotype O:8 / biotype 1B (strain NCTC 13174 / 8081).